The chain runs to 323 residues: Peroxidase 16 (323 aa).

A signal peptide spans 1–23 (MKNQSSFSIVALLLIFFSSSVFA). 4 disulfide bridges follow: cysteine 34–cysteine 113, cysteine 67–cysteine 72, cysteine 119–cysteine 319, and cysteine 198–cysteine 230. The active-site Proton acceptor is the histidine 65. The Ca(2+) site is built by aspartate 66, valine 69, glycine 71, aspartate 73, and serine 75. Substrate is bound at residue proline 161. Histidine 191 is a binding site for heme b. Ca(2+) is bound at residue threonine 192. 3 residues coordinate Ca(2+): aspartate 243, serine 246, and aspartate 251.

The protein belongs to the peroxidase family. Classical plant (class III) peroxidase subfamily. The cofactor is heme b. Requires Ca(2+) as cofactor. In terms of tissue distribution, expressed in the whole plant, but preferentially in roots and leaves.

The protein localises to the secreted. The enzyme catalyses 2 a phenolic donor + H2O2 = 2 a phenolic radical donor + 2 H2O. Its function is as follows. Removal of H(2)O(2), oxidation of toxic reductants, biosynthesis and degradation of lignin, suberization, auxin catabolism, response to environmental stresses such as wounding, pathogen attack and oxidative stress. These functions might be dependent on each isozyme/isoform in each plant tissue. The chain is Peroxidase 16 (PER16) from Arabidopsis thaliana (Mouse-ear cress).